A 467-amino-acid polypeptide reads, in one-letter code: Light-independent protochlorophyllide reductase subunit N (467 aa).

Residues Cys-22, Cys-47, and Cys-107 each coordinate [4Fe-4S] cluster.

This sequence belongs to the BchN/ChlN family. Protochlorophyllide reductase is composed of three subunits; ChlL, ChlN and ChlB. Forms a heterotetramer of two ChlB and two ChlN subunits. Requires [4Fe-4S] cluster as cofactor.

It localises to the plastid. Its subcellular location is the chloroplast. It carries out the reaction chlorophyllide a + oxidized 2[4Fe-4S]-[ferredoxin] + 2 ADP + 2 phosphate = protochlorophyllide a + reduced 2[4Fe-4S]-[ferredoxin] + 2 ATP + 2 H2O. Its pathway is porphyrin-containing compound metabolism; chlorophyll biosynthesis (light-independent). Functionally, component of the dark-operative protochlorophyllide reductase (DPOR) that uses Mg-ATP and reduced ferredoxin to reduce ring D of protochlorophyllide (Pchlide) to form chlorophyllide a (Chlide). This reaction is light-independent. The NB-protein (ChlN-ChlB) is the catalytic component of the complex. The protein is Light-independent protochlorophyllide reductase subunit N of Chara vulgaris (Common stonewort).